The chain runs to 89 residues: Dynein light chain (89 aa).

Belongs to the dynein light chain family. In terms of tissue distribution, tegument.

It is found in the cytoplasm. The protein localises to the cytoskeleton. Its function is as follows. Acts as a non-catalytic accessory component of a dynein complex. The polypeptide is Dynein light chain (DLC) (Schistosoma mansoni (Blood fluke)).